The chain runs to 512 residues: Mesoderm induction early response protein 1 (512 aa).

The span at 1–16 (MAEPSVESSSPGGSAT) shows a compositional bias: low complexity. Disordered stretches follow at residues 1–63 (MAEP…REGD) and 75–173 (YGST…EDYI). Position 10 is a phosphoserine (Ser10). The segment covering 17-36 (SDDHEFDPSADMLVHDFDDE) has biased composition (basic and acidic residues). Acidic residues-rich tracts occupy residues 37 to 46 (RTLEEEEMME) and 83 to 105 (EEDEEEEEEEEEGEDDEDADNDD). Over residues 129–144 (QSSNDDPSQSVASQDA) the composition is skewed to polar residues. A Phosphoserine modification is found at Ser141. Tyr155 carries the phosphotyrosine modification. 2 positions are modified to phosphoserine: Ser160 and Ser166. A compositionally biased stretch (acidic residues) spans 160-173 (SEVEEESEEDEDYI). Positions 180-278 (KEIMVGSMFQ…EALRRLRFNV (99 aa)) constitute an ELM2 domain. The interaction with HDAC1 stretch occupies residues 180-284 (KEIMVGSMFQ…RFNVKAAREE (105 aa)). Lys239 is covalently cross-linked (Glycyl lysine isopeptide (Lys-Gly) (interchain with G-Cter in SUMO2)). The SANT domain occupies 283–335 (EELSVWTEEECRNFEQGLKAYGKDFHLIQANKVRTRSVGECVAFYYMWKKSER). The disordered stretch occupies residues 366–512 (ESESAASSRA…KFEELENTDD (147 aa)). Residues Ser367, Ser369, and Ser377 each carry the phosphoserine modification. Residues 396-409 (TVSTTNQNGVSSNG) are compositionally biased toward polar residues. Basic and acidic residues predominate over residues 414 to 423 (LNKEEVKVEG). Lys420 participates in a covalent cross-link: Glycyl lysine isopeptide (Lys-Gly) (interchain with G-Cter in SUMO2). Position 448 is a phosphothreonine (Thr448). The span at 462–475 (ARNENDFDEKSERP) shows a compositional bias: basic and acidic residues. The span at 482-494 (NSNGKESPGSSEF) shows a compositional bias: polar residues. Residues Ser483, Ser488, and Ser491 each carry the phosphoserine modification.

In terms of assembly, interacts with HDAC1. Part of a complex containing at least CDYL, MIER1, MIER2, HDAC1 and HDAC2.

It is found in the nucleus. Transcriptional repressor regulating the expression of a number of genes including SP1 target genes. Probably functions through recruitment of HDAC1 a histone deacetylase involved in chromatin silencing. The sequence is that of Mesoderm induction early response protein 1 (MIER1) from Pongo abelii (Sumatran orangutan).